The following is a 629-amino-acid chain: Aspartate--tRNA(Asp/Asn) ligase (629 aa).

Residues 1–24 (MERSSRADLISEDSHPARTHTCGD) form a disordered region. Residues 12–24 (EDSHPARTHTCGD) are compositionally biased toward basic and acidic residues. Position 194 (glutamate 194) interacts with L-aspartate. The segment at 218 to 221 (QTYK) is aspartate. Arginine 240 is a binding site for L-aspartate. ATP is bound by residues 240–242 (RDE) and glutamine 249. Histidine 474 is an L-aspartate binding site. Residue glutamate 508 participates in ATP binding. Arginine 515 is a binding site for L-aspartate. Residue 560–563 (GLDR) participates in ATP binding.

The protein belongs to the class-II aminoacyl-tRNA synthetase family. Type 1 subfamily. As to quaternary structure, homodimer.

The protein resides in the cytoplasm. The enzyme catalyses tRNA(Asx) + L-aspartate + ATP = L-aspartyl-tRNA(Asx) + AMP + diphosphate. In terms of biological role, aspartyl-tRNA synthetase with relaxed tRNA specificity since it is able to aspartylate not only its cognate tRNA(Asp) but also tRNA(Asn). Reaction proceeds in two steps: L-aspartate is first activated by ATP to form Asp-AMP and then transferred to the acceptor end of tRNA(Asp/Asn). In Salinibacter ruber (strain DSM 13855 / M31), this protein is Aspartate--tRNA(Asp/Asn) ligase.